Here is a 350-residue protein sequence, read N- to C-terminus: Transmembrane protein 185A (350 aa).

7 helical membrane passes run 16 to 36, 41 to 61, 81 to 101, 111 to 131, 177 to 197, 211 to 231, and 240 to 260; these read LIYA…DGII, WAVF…ASVG, FKAM…EVLV, FWLL…AACV, ILMS…VLFL, ITMA…EILL, and AFSC…LMAT. The tract at residues 298–350 is mediates interaction with MAP1B; that stretch reads DLHHEDSEETEETPVPEPPKIAPMFRKKARVVITQSPGKYVLPPPKLNIEMPD.

The protein belongs to the TMEM185 family. In terms of assembly, interacts with MAP1B. In terms of tissue distribution, broadly expressed in brain where it is specifically expressed by neurons (at protein level). Also detected in some cells of arterioles, intestine, lung and testis (at protein level).

Its subcellular location is the cell projection. The protein resides in the dendrite. It localises to the membrane. The protein is Transmembrane protein 185A (Tmem185a) of Mus musculus (Mouse).